The following is a 75-amino-acid chain: Small ribosomal subunit protein bS21B (75 aa).

Residues 33–52 (RRSYEKPSERRAREKAEAVR) are compositionally biased toward basic and acidic residues. The disordered stretch occupies residues 33–75 (RRSYEKPSERRAREKAEAVRRARKLARKQAQREGLLPGKKRAA).

Belongs to the bacterial ribosomal protein bS21 family.

The protein is Small ribosomal subunit protein bS21B of Chelativorans sp. (strain BNC1).